The chain runs to 249 residues: NAD kinase (249 aa).

The active-site Proton acceptor is the Asp-45. NAD(+) is bound by residues 45-46 (DG), Arg-50, 110-111 (NE), Asp-138, and 149-154 (SGWGMS).

Belongs to the NAD kinase family. A divalent metal cation serves as cofactor.

The protein resides in the cytoplasm. It carries out the reaction NAD(+) + ATP = ADP + NADP(+) + H(+). Involved in the regulation of the intracellular balance of NAD and NADP, and is a key enzyme in the biosynthesis of NADP. Catalyzes specifically the phosphorylation on 2'-hydroxyl of the adenosine moiety of NAD to yield NADP. The sequence is that of NAD kinase from Saccharolobus solfataricus (strain ATCC 35092 / DSM 1617 / JCM 11322 / P2) (Sulfolobus solfataricus).